A 331-amino-acid chain; its full sequence is NADH-quinone oxidoreductase subunit H (331 aa).

8 helical membrane-spanning segments follow: residues 13–33 (FLISSATVIFLVLNIAAVLTL), 80–100 (WVFLAAPIAMFLPAAAVWLVI), 113–133 (IGLVYFFAITSIGALGVIMAG), 159–179 (LILSLLGVAMLTGSLSMVDIV), 183–203 (AGGFWNWIIWPQLPMFLAFFV), 249–269 (VMSAVASTLFLGGWQPPLPFL), 273–293 (VFNWLWLGIKTTLLIFVFQWI), and 311–331 (KILVPVTILWLFVTAGAMLVI).

The protein belongs to the complex I subunit 1 family. NDH-1 is composed of 14 different subunits. Subunits NuoA, H, J, K, L, M, N constitute the membrane sector of the complex.

The protein localises to the cell membrane. The enzyme catalyses a quinone + NADH + 5 H(+)(in) = a quinol + NAD(+) + 4 H(+)(out). NDH-1 shuttles electrons from NADH, via FMN and iron-sulfur (Fe-S) centers, to quinones in the respiratory chain. The immediate electron acceptor for the enzyme in this species is believed to be ubiquinone. Couples the redox reaction to proton translocation (for every two electrons transferred, four hydrogen ions are translocated across the cytoplasmic membrane), and thus conserves the redox energy in a proton gradient. This subunit may bind ubiquinone. The polypeptide is NADH-quinone oxidoreductase subunit H (Rubrobacter xylanophilus (strain DSM 9941 / JCM 11954 / NBRC 16129 / PRD-1)).